Consider the following 284-residue polypeptide: UDP-N-acetylenolpyruvoylglucosamine reductase (284 aa).

One can recognise an FAD-binding PCMH-type domain in the interval 21 to 180 (KIGGPARLFV…LKAAFKLKKA (160 aa)). R159 is a catalytic residue. Catalysis depends on S209, which acts as the Proton donor. Residue E280 is part of the active site.

This sequence belongs to the MurB family. Requires FAD as cofactor.

It is found in the cytoplasm. It catalyses the reaction UDP-N-acetyl-alpha-D-muramate + NADP(+) = UDP-N-acetyl-3-O-(1-carboxyvinyl)-alpha-D-glucosamine + NADPH + H(+). It functions in the pathway cell wall biogenesis; peptidoglycan biosynthesis. Its function is as follows. Cell wall formation. The chain is UDP-N-acetylenolpyruvoylglucosamine reductase from Pseudothermotoga lettingae (strain ATCC BAA-301 / DSM 14385 / NBRC 107922 / TMO) (Thermotoga lettingae).